The chain runs to 253 residues: Sulfoacetaldehyde reductase (253 aa).

An NADP(+)-binding site is contributed by 6 to 30 (FITGATSGFGRAAAHRFAAAGWSLV). Substrate is bound at residue serine 139. Tyrosine 152 functions as the Proton acceptor in the catalytic mechanism.

The protein belongs to the short-chain dehydrogenases/reductases (SDR) family. Homodimer and heterotetramer.

The catalysed reaction is 2-hydroxyethane-1-sulfonate + NADP(+) = sulfoacetaldehyde + NADPH + H(+). It participates in organosulfur degradation. Catalyzes the formation of isethionate from 2-sulfoacetaldehyde in the deaminative pathway of taurine. The enzyme is specific for NADPH; NADH is not a substrate. Responsible for most of the activity observed in taurine-grown cells. The polypeptide is Sulfoacetaldehyde reductase (isfD) (Chromohalobacter salexigens (strain ATCC BAA-138 / DSM 3043 / CIP 106854 / NCIMB 13768 / 1H11)).